A 544-amino-acid chain; its full sequence is Membrane protein insertase YidC (544 aa).

Helical transmembrane passes span 13–33 (LSLFLIGLFMLINDIFSSNIL), 343–363 (WGLSIIFLTIVVRILIFPLTF), 409–429 (LGGCLPVILQLPIFFALYSLV), 461–481 (LYFVSWTDIRILPFIMMFTQL), and 506–526 (MPIMFFFILYNMPSGLLIYWI).

The protein belongs to the OXA1/ALB3/YidC family. Type 1 subfamily. As to quaternary structure, interacts with the Sec translocase complex via SecD. Specifically interacts with transmembrane segments of nascent integral membrane proteins during membrane integration.

It localises to the cell inner membrane. Its function is as follows. Required for the insertion and/or proper folding and/or complex formation of integral membrane proteins into the membrane. Involved in integration of membrane proteins that insert both dependently and independently of the Sec translocase complex, as well as at least some lipoproteins. Aids folding of multispanning membrane proteins. In Borreliella burgdorferi (strain ATCC 35210 / DSM 4680 / CIP 102532 / B31) (Borrelia burgdorferi), this protein is Membrane protein insertase YidC.